Here is a 569-residue protein sequence, read N- to C-terminus: 2-succinyl-5-enolpyruvyl-6-hydroxy-3-cyclohexene-1-carboxylate synthase (569 aa).

This sequence belongs to the TPP enzyme family. MenD subfamily. Homodimer. Mg(2+) serves as cofactor. Mn(2+) is required as a cofactor. The cofactor is thiamine diphosphate.

It catalyses the reaction isochorismate + 2-oxoglutarate + H(+) = 5-enolpyruvoyl-6-hydroxy-2-succinyl-cyclohex-3-ene-1-carboxylate + CO2. The protein operates within quinol/quinone metabolism; 1,4-dihydroxy-2-naphthoate biosynthesis; 1,4-dihydroxy-2-naphthoate from chorismate: step 2/7. It participates in quinol/quinone metabolism; menaquinone biosynthesis. Its function is as follows. Catalyzes the thiamine diphosphate-dependent decarboxylation of 2-oxoglutarate and the subsequent addition of the resulting succinic semialdehyde-thiamine pyrophosphate anion to isochorismate to yield 2-succinyl-5-enolpyruvyl-6-hydroxy-3-cyclohexene-1-carboxylate (SEPHCHC). The sequence is that of 2-succinyl-5-enolpyruvyl-6-hydroxy-3-cyclohexene-1-carboxylate synthase from Paenarthrobacter aurescens (strain TC1).